The primary structure comprises 323 residues: Tyrosine recombinase XerD (323 aa).

The region spanning 21–106 (AEDDQAIQRF…TLRGFYALCL (86 aa)) is the Core-binding (CB) domain. The 191-residue stretch at 127-317 (SLPKALTESQ…ARQHLQTLHA (191 aa)) folds into the Tyr recombinase domain. Catalysis depends on residues arginine 167, lysine 191, histidine 269, arginine 272, and histidine 295. Tyrosine 304 functions as the O-(3'-phospho-DNA)-tyrosine intermediate in the catalytic mechanism.

It belongs to the 'phage' integrase family. XerD subfamily. Forms a cyclic heterotetrameric complex composed of two molecules of XerC and two molecules of XerD.

The protein resides in the cytoplasm. In terms of biological role, site-specific tyrosine recombinase, which acts by catalyzing the cutting and rejoining of the recombining DNA molecules. The XerC-XerD complex is essential to convert dimers of the bacterial chromosome into monomers to permit their segregation at cell division. It also contributes to the segregational stability of plasmids. The chain is Tyrosine recombinase XerD from Xanthomonas campestris pv. campestris (strain ATCC 33913 / DSM 3586 / NCPPB 528 / LMG 568 / P 25).